Consider the following 62-residue polypeptide: Photosystem II reaction center protein Z (62 aa).

Transmembrane regions (helical) follow at residues 8-28 (AVFALIATSLILLISVPVVFA) and 41-61 (FSGTSLWIGLVFLVGILNSLI).

This sequence belongs to the PsbZ family. As to quaternary structure, PSII is composed of 1 copy each of membrane proteins PsbA, PsbB, PsbC, PsbD, PsbE, PsbF, PsbH, PsbI, PsbJ, PsbK, PsbL, PsbM, PsbT, PsbY, PsbZ, Psb30/Ycf12, at least 3 peripheral proteins of the oxygen-evolving complex and a large number of cofactors. It forms dimeric complexes.

The protein localises to the plastid. Its subcellular location is the chloroplast thylakoid membrane. In terms of biological role, may control the interaction of photosystem II (PSII) cores with the light-harvesting antenna, regulates electron flow through the 2 photosystem reaction centers. PSII is a light-driven water plastoquinone oxidoreductase, using light energy to abstract electrons from H(2)O, generating a proton gradient subsequently used for ATP formation. This chain is Photosystem II reaction center protein Z, found in Nicotiana sylvestris (Wood tobacco).